A 163-amino-acid chain; its full sequence is Phosphopantetheine adenylyltransferase (163 aa).

T11 contributes to the substrate binding site. ATP-binding positions include 11–12 (TF) and H19. Substrate-binding residues include K43, L75, and R89. Residues 90-92 (GLR), E100, and 125-131 (YMFISAT) contribute to the ATP site.

The protein belongs to the bacterial CoaD family. As to quaternary structure, homohexamer. It depends on Mg(2+) as a cofactor.

It localises to the cytoplasm. It catalyses the reaction (R)-4'-phosphopantetheine + ATP + H(+) = 3'-dephospho-CoA + diphosphate. It functions in the pathway cofactor biosynthesis; coenzyme A biosynthesis; CoA from (R)-pantothenate: step 4/5. Functionally, reversibly transfers an adenylyl group from ATP to 4'-phosphopantetheine, yielding dephospho-CoA (dPCoA) and pyrophosphate. This is Phosphopantetheine adenylyltransferase from Aromatoleum aromaticum (strain DSM 19018 / LMG 30748 / EbN1) (Azoarcus sp. (strain EbN1)).